A 411-amino-acid chain; its full sequence is Serine/threonine-protein kinase 54 (411 aa).

Phosphoserine; by PHOT1 is present on residues Ser-43 and Ser-45. In terms of domain architecture, Protein kinase spans 108–385; that stretch reads LIIKSVIARG…EEVVAMLEAI (278 aa). ATP contacts are provided by residues 114–122 and Lys-135; that span reads IARGTFGTV. Asp-253 acts as the Proton acceptor in catalysis. Thr-286 carries the phosphothreonine modification.

Belongs to the protein kinase superfamily. Ser/Thr protein kinase family. Binds to CBC2. Associates with PHOT2, BLUS1 and PM H(+)-ATPase (e.g. AHA1). Post-translationally, autophosphorylated. Phosphorylated in guard cells by HT1 in response to low CO(2) concentrations and by PHOT1 after blue light (BL) exposure. Expressed in guard cells.

It localises to the cytoplasm. The protein localises to the cytosol. The catalysed reaction is L-seryl-[protein] + ATP = O-phospho-L-seryl-[protein] + ADP + H(+). The enzyme catalyses L-threonyl-[protein] + ATP = O-phospho-L-threonyl-[protein] + ADP + H(+). Serine/threonine protein kinase that phosphorylates proteins on serine and threonine residues. Collectively with CBC2, acts as a negative regulator of stomatal opening, probably via the inhibition of plasma membrane-type ATPases (AHA1 and AHA2) activity in guard cells, but in an abscisic acid (ABA)-independent manner. However, at low concentrations of CO(2), together with CBC2, stimulates stomatal opening via the inhibition of S-type anion channels in response to blue light (BL) and red light (RL), thus being a key component to maximize photosynthesis in the light under low CO(2) conditions. Required for temperature decrease in leaves. Downstream target of HIGH LEAF TEMPERATURE1 (HT1) during low CO(2)-induced stomatal opening. Also functions in the signaling pathways of phototropins. This is Serine/threonine-protein kinase 54 from Arabidopsis thaliana (Mouse-ear cress).